Reading from the N-terminus, the 513-residue chain is Cytochrome P450 1A2 (513 aa).

Serine 68 carries O-linked (GlcNAc) serine glycosylation. Phenylalanine 225 provides a ligand contact to substrate. Cysteine 456 contacts heme.

Belongs to the cytochrome P450 family. As to quaternary structure, interacts with PGRMC1; the interaction requires PGRMC1 homodimerization. It depends on heme as a cofactor. In terms of tissue distribution, found in lung and liver.

Its subcellular location is the endoplasmic reticulum membrane. The protein localises to the microsome membrane. It carries out the reaction an organic molecule + reduced [NADPH--hemoprotein reductase] + O2 = an alcohol + oxidized [NADPH--hemoprotein reductase] + H2O + H(+). The enzyme catalyses 17beta-estradiol + reduced [NADPH--hemoprotein reductase] + O2 = 2-hydroxy-17beta-estradiol + oxidized [NADPH--hemoprotein reductase] + H2O + H(+). The catalysed reaction is 17beta-estradiol + reduced [NADPH--hemoprotein reductase] + O2 = 4-hydroxy-17beta-estradiol + oxidized [NADPH--hemoprotein reductase] + H2O + H(+). It catalyses the reaction estrone + reduced [NADPH--hemoprotein reductase] + O2 = 2-hydroxyestrone + oxidized [NADPH--hemoprotein reductase] + H2O + H(+). It carries out the reaction estrone + reduced [NADPH--hemoprotein reductase] + O2 = 4-hydroxyestrone + oxidized [NADPH--hemoprotein reductase] + H2O + H(+). The enzyme catalyses cholesterol + reduced [NADPH--hemoprotein reductase] + O2 = 25-hydroxycholesterol + oxidized [NADPH--hemoprotein reductase] + H2O + H(+). The catalysed reaction is all-trans-retinol + reduced [NADPH--hemoprotein reductase] + O2 = all-trans-retinal + oxidized [NADPH--hemoprotein reductase] + 2 H2O + H(+). It catalyses the reaction all-trans-retinal + reduced [NADPH--hemoprotein reductase] + O2 = all-trans-retinoate + oxidized [NADPH--hemoprotein reductase] + H2O + 2 H(+). It carries out the reaction (5Z,8Z,11Z,14Z)-eicosatetraenoate + reduced [NADPH--hemoprotein reductase] + O2 = (14R,15S)-epoxy-(5Z,8Z,11Z)-eicosatrienoate + oxidized [NADPH--hemoprotein reductase] + H2O + H(+). The enzyme catalyses (5Z,8Z,11Z,14Z)-eicosatetraenoate + reduced [NADPH--hemoprotein reductase] + O2 = (14S,15R)-epoxy-(5Z,8Z,11Z)-eicosatrienoate + oxidized [NADPH--hemoprotein reductase] + H2O + H(+). The catalysed reaction is (5Z,8Z,11Z,14Z,17Z)-eicosapentaenoate + reduced [NADPH--hemoprotein reductase] + O2 = (17R,18S)-epoxy-(5Z,8Z,11Z,14Z)-eicosatetraenoate + oxidized [NADPH--hemoprotein reductase] + H2O + H(+). It catalyses the reaction (4Z,7Z,10Z,13Z,16Z,19Z)-docosahexaenoate + reduced [NADPH--hemoprotein reductase] + O2 = (19R,20S)-epoxy-(4Z,7Z,10Z,13Z,16Z)-docosapentaenoate + oxidized [NADPH--hemoprotein reductase] + H2O + H(+). It carries out the reaction (5S)-hydroperoxy-(6E,8Z,11Z,14Z)-eicosatetraenoate = 5-oxo-(6E,8Z,11Z,14Z)-eicosatetraenoate + H2O. The enzyme catalyses (12S)-hydroperoxy-(5Z,8Z,10E,14Z)-eicosatetraenoate = 12-oxo-(5Z,8Z,10E,14Z)-eicosatetraenoate + H2O. The catalysed reaction is (15S)-hydroperoxy-(5Z,8Z,11Z,13E)-eicosatetraenoate = 15-oxo-(5Z,8Z,11Z,13E)-eicosatetraenoate + H2O. It catalyses the reaction (13S)-hydroperoxy-(9Z,11E)-octadecadienoate = 13-oxo-(9Z,11E)-octadecadienoate + H2O. It carries out the reaction (5Z,8Z,11Z,14Z)-eicosatetraenoate + reduced [NADPH--hemoprotein reductase] + O2 = 13-hydroxy-(5Z,8Z,11Z,14Z)-eicosatetraenoate + oxidized [NADPH--hemoprotein reductase] + H2O + H(+). The enzyme catalyses (5Z,8Z,11Z,14Z)-eicosatetraenoate + reduced [NADPH--hemoprotein reductase] + O2 = 19-hydroxy-(5Z,8Z,11Z,14Z)-eicosatetraenoate + oxidized [NADPH--hemoprotein reductase] + H2O + H(+). The catalysed reaction is (9Z,12Z)-octadecadienoate + reduced [NADPH--hemoprotein reductase] + O2 = 11-hydroxy-(9Z,12Z)-octadecadienoate + oxidized [NADPH--hemoprotein reductase] + H2O + H(+). It functions in the pathway cofactor metabolism; retinol metabolism. Its pathway is steroid metabolism; cholesterol metabolism. The protein operates within lipid metabolism; arachidonate metabolism. Functionally, a cytochrome P450 monooxygenase involved in the metabolism of various endogenous substrates, including fatty acids, steroid hormones and vitamins. Mechanistically, uses molecular oxygen inserting one oxygen atom into a substrate, and reducing the second into a water molecule, with two electrons provided by NADPH via cytochrome P450 reductase (NADPH--hemoprotein reductase). Catalyzes the hydroxylation of carbon-hydrogen bonds. Exhibits high catalytic activity for the formation of hydroxyestrogens from estrone (E1) and 17beta-estradiol (E2), namely 2-hydroxy E1 and E2. Metabolizes cholesterol toward 25-hydroxycholesterol, a physiological regulator of cellular cholesterol homeostasis. May act as a major enzyme for all-trans retinoic acid biosynthesis in the liver. Catalyzes two successive oxidative transformation of all-trans retinol to all-trans retinal and then to the active form all-trans retinoic acid. Primarily catalyzes stereoselective epoxidation of the last double bond of polyunsaturated fatty acids (PUFA), displaying a strong preference for the (R,S) stereoisomer. Catalyzes bisallylic hydroxylation and omega-1 hydroxylation of PUFA. May also participate in eicosanoids metabolism by converting hydroperoxide species into oxo metabolites (lipoxygenase-like reaction, NADPH-independent). Plays a role in the oxidative metabolism of xenobiotics. Catalyzes the N-hydroxylation of heterocyclic amines and the O-deethylation of phenacetin. Metabolizes caffeine via N3-demethylation. The sequence is that of Cytochrome P450 1A2 (CYP1A2) from Mesocricetus auratus (Golden hamster).